The following is a 464-amino-acid chain: Trigger factor (464 aa).

The PPIase FKBP-type domain occupies 162–243 (GDFISIDLSA…VGTVKERELP (82 aa)). The segment at 435–464 (ELFGNGEAETEEAASTDEAASDSTESEDQK) is disordered.

It belongs to the FKBP-type PPIase family. Tig subfamily.

The protein localises to the cytoplasm. It catalyses the reaction [protein]-peptidylproline (omega=180) = [protein]-peptidylproline (omega=0). In terms of biological role, involved in protein export. Acts as a chaperone by maintaining the newly synthesized protein in an open conformation. Functions as a peptidyl-prolyl cis-trans isomerase. This Rhodococcus jostii (strain RHA1) protein is Trigger factor.